Consider the following 404-residue polypeptide: UBP1-associated protein 2C (404 aa).

Residues 1 to 29 (MDMMKKRKLDENGNGLNTNGGGTIGPTRL) form a disordered region. RRM domains are found at residues 75-152 (RKLF…LAAS) and 167-248 (RKIY…GKKG). Disordered regions lie at residues 246–270 (KKGGKPGMPQAQDGGSGHGHVHGEG) and 344–404 (GSGQ…PPNY).

Expressed in root apical and lateral meristems, young leaves and embryos.

Its subcellular location is the nucleus. Heterogeneous nuclear ribonucleoprotein (hnRNP)-like protein that acts as a component of a complex regulating the turnover of mRNAs in the nucleus. Binds with high affinity to RNA molecules that contain U-rich sequences in 3'-UTRs. May function in complex with UBP1 and contribute to the stabilization of mRNAs in the nucleus. The protein is UBP1-associated protein 2C (UBA2C) of Arabidopsis thaliana (Mouse-ear cress).